Reading from the N-terminus, the 269-residue chain is GTP cyclohydrolase FolE2 (269 aa).

This sequence belongs to the GTP cyclohydrolase IV family.

It catalyses the reaction GTP + H2O = 7,8-dihydroneopterin 3'-triphosphate + formate + H(+). It participates in cofactor biosynthesis; 7,8-dihydroneopterin triphosphate biosynthesis; 7,8-dihydroneopterin triphosphate from GTP: step 1/1. Functionally, converts GTP to 7,8-dihydroneopterin triphosphate. The protein is GTP cyclohydrolase FolE2 of Burkholderia multivorans (strain ATCC 17616 / 249).